A 292-amino-acid chain; its full sequence is HTH-type transcriptional regulator BlaA (292 aa).

In terms of domain architecture, HTH lysR-type spans L5–T62. Residues F22–R41 constitute a DNA-binding region (H-T-H motif).

Belongs to the LysR transcriptional regulatory family.

Its function is as follows. Positive regulator of the expression of the gene (blaB) for beta-lactamase. The protein is HTH-type transcriptional regulator BlaA (blaA) of Proteus vulgaris.